We begin with the raw amino-acid sequence, 248 residues long: MGRKFVVGGNWKMNGDKNQINEIVNNLKKGPLDPNVEVIVGVPAIYLSYVKTIIPDNVEVAAQNCWKSPKGAFTGEISPAMIKDVGVNWVILGHSERRTIFGEKDELVAEKVAHALESGLKVIACIGETLEERESGKTEEVVFRQLKALVSAIGDKWENIVLAYEPVWAIGTGKTATPQQAQDVHHALRNWLSANVSGSVSDAVRIQYGGSVTAANAKELASCKDIDGFLVGGASLKPEFVEIVNANQ.

Lys-12 contributes to the substrate binding site. The Electrophile role is filled by His-94. Glu-165 (proton acceptor) is an active-site residue.

It belongs to the triosephosphate isomerase family. In terms of assembly, homodimer.

The enzyme catalyses D-glyceraldehyde 3-phosphate = dihydroxyacetone phosphate. Its pathway is carbohydrate biosynthesis; gluconeogenesis. It participates in carbohydrate degradation; glycolysis; D-glyceraldehyde 3-phosphate from glycerone phosphate: step 1/1. The polypeptide is Triosephosphate isomerase (Tpi) (Bombyx mori (Silk moth)).